We begin with the raw amino-acid sequence, 122 residues long: Large ribosomal subunit protein uL14 (122 aa).

It belongs to the universal ribosomal protein uL14 family. As to quaternary structure, part of the 50S ribosomal subunit. Forms a cluster with proteins L3 and L19. In the 70S ribosome, L14 and L19 interact and together make contacts with the 16S rRNA in bridges B5 and B8.

Its function is as follows. Binds to 23S rRNA. Forms part of two intersubunit bridges in the 70S ribosome. In Leptothrix cholodnii (strain ATCC 51168 / LMG 8142 / SP-6) (Leptothrix discophora (strain SP-6)), this protein is Large ribosomal subunit protein uL14.